The chain runs to 172 residues: 3-phenylpropionate/cinnamic acid dioxygenase subunit beta (172 aa).

This sequence belongs to the bacterial ring-hydroxylating dioxygenase beta subunit family. This dioxygenase system consists of four proteins: the two subunits of the hydroxylase component (HcaE and HcaF), a ferredoxin (HcaC) and a ferredoxin reductase (HcaD).

It catalyses the reaction 3-phenylpropanoate + NADH + O2 + H(+) = 3-(cis-5,6-dihydroxycyclohexa-1,3-dien-1-yl)propanoate + NAD(+). The enzyme catalyses (E)-cinnamate + NADH + O2 + H(+) = (2E)-3-(cis-5,6-dihydroxycyclohexa-1,3-dien-1-yl)prop-2-enoate + NAD(+). It participates in aromatic compound metabolism; 3-phenylpropanoate degradation. Functionally, part of the multicomponent 3-phenylpropionate dioxygenase. Converts 3-phenylpropionic acid (PP) and cinnamic acid (CI) into 3-phenylpropionate-dihydrodiol (PP-dihydrodiol) and cinnamic acid-dihydrodiol (CI-dihydrodiol), respectively. The polypeptide is 3-phenylpropionate/cinnamic acid dioxygenase subunit beta (Escherichia coli O17:K52:H18 (strain UMN026 / ExPEC)).